The following is a 589-amino-acid chain: Probable arginine--tRNA ligase, cytoplasmic (589 aa).

L-arginine-binding positions include 121 to 123 (SPN), histidine 132, tyrosine 332, aspartate 336, and glutamine 360. The short motif at 121–132 (SPNIAKPFHAGH) is the 'HIGH' region element. Residues 469–483 (DTGPYLQYAHARLCS) form an interaction with tRNA region.

It belongs to the class-I aminoacyl-tRNA synthetase family.

Its subcellular location is the cytoplasm. The protein resides in the cytosol. It carries out the reaction tRNA(Arg) + L-arginine + ATP = L-arginyl-tRNA(Arg) + AMP + diphosphate. Forms part of a macromolecular complex that catalyzes the attachment of specific amino acids to cognate tRNAs during protein synthesis. This is Probable arginine--tRNA ligase, cytoplasmic (argS1) from Dictyostelium discoideum (Social amoeba).